The sequence spans 357 residues: UDP-N-acetylglucosamine--N-acetylmuramyl-(pentapeptide) pyrophosphoryl-undecaprenol N-acetylglucosamine transferase (357 aa).

Residues 7 to 9 (TGG), N119, R159, S187, I241, and Q286 each bind UDP-N-acetyl-alpha-D-glucosamine.

It belongs to the glycosyltransferase 28 family. MurG subfamily.

Its subcellular location is the cell inner membrane. It catalyses the reaction di-trans,octa-cis-undecaprenyl diphospho-N-acetyl-alpha-D-muramoyl-L-alanyl-D-glutamyl-meso-2,6-diaminopimeloyl-D-alanyl-D-alanine + UDP-N-acetyl-alpha-D-glucosamine = di-trans,octa-cis-undecaprenyl diphospho-[N-acetyl-alpha-D-glucosaminyl-(1-&gt;4)]-N-acetyl-alpha-D-muramoyl-L-alanyl-D-glutamyl-meso-2,6-diaminopimeloyl-D-alanyl-D-alanine + UDP + H(+). It participates in cell wall biogenesis; peptidoglycan biosynthesis. Functionally, cell wall formation. Catalyzes the transfer of a GlcNAc subunit on undecaprenyl-pyrophosphoryl-MurNAc-pentapeptide (lipid intermediate I) to form undecaprenyl-pyrophosphoryl-MurNAc-(pentapeptide)GlcNAc (lipid intermediate II). This chain is UDP-N-acetylglucosamine--N-acetylmuramyl-(pentapeptide) pyrophosphoryl-undecaprenol N-acetylglucosamine transferase, found in Nitrosomonas europaea (strain ATCC 19718 / CIP 103999 / KCTC 2705 / NBRC 14298).